The following is a 422-amino-acid chain: KFYYHMYGATINRLNVFNGNCTVFTKLGHQGNMWMYAEVTVFVQNNITFEGIRGYSYTGDIAIDDVSLMEGICAGCKENLTDSFGHLHITYSAKFSPDCTWTIRNSSISEPVAIISIEEVQFAYCRGYIKVFDGSGAQIFTRRGCNENHTSNTFLEITFQESQNVTIQVSLENNQSYARFGYGILEGGLESALLLPGWNASLENKTSTSLQLRWMDISSWLRDGLRFFVVTAKSSYSNLTVKGLFSSNTTFAEISGLDPYMAYDVSVVAVDGDGSQFKSTVLQARTDEWVPSRAPSVFVTSVTSTSVTVQWNPLPQQYHNGRLLGYRVFIRKTANSPFPLDESNVAVYNTSWVTLNNLKPGQPYEVNVSAFTSKGDGPRSTHYIVTTAVCGKRPTHSTLNCRRHSSTHQRLALASNATDARW.

The MAM domain maps to 1–75 (KFYYHMYGAT…VSLMEGICAG (75 aa)). 3 consecutive Fibronectin type-III domains span residues 2 to 74 (FYYH…GICA), 196 to 286 (PGWN…QART), and 291 to 386 (PSRA…YIVT).

As to expression, component of the acid-insoluble and acid-soluble organic matrix of the aragonitic skeleton (at protein level).

The protein localises to the secreted. The sequence is that of MAM and fibronectin type III domain-containing protein 1 from Acropora millepora (Staghorn coral).